The chain runs to 341 residues: Anthranilate phosphoribosyltransferase (341 aa).

5-phospho-alpha-D-ribose 1-diphosphate is bound by residues Gly-79, 82 to 83 (GD), Thr-87, 89 to 92 (NIST), 107 to 115 (KHGNRAVSS), and Ser-119. Gly-79 lines the anthranilate pocket. Mg(2+) is bound at residue Ser-91. Residue Asn-110 coordinates anthranilate. Anthranilate is bound at residue Arg-165. Asp-224 and Glu-225 together coordinate Mg(2+).

This sequence belongs to the anthranilate phosphoribosyltransferase family. Homodimer. Requires Mg(2+) as cofactor.

It carries out the reaction N-(5-phospho-beta-D-ribosyl)anthranilate + diphosphate = 5-phospho-alpha-D-ribose 1-diphosphate + anthranilate. It functions in the pathway amino-acid biosynthesis; L-tryptophan biosynthesis; L-tryptophan from chorismate: step 2/5. Functionally, catalyzes the transfer of the phosphoribosyl group of 5-phosphorylribose-1-pyrophosphate (PRPP) to anthranilate to yield N-(5'-phosphoribosyl)-anthranilate (PRA). This Bacillus cereus (strain B4264) protein is Anthranilate phosphoribosyltransferase.